The following is a 534-amino-acid chain: Importin subunit alpha-1b (534 aa).

In terms of domain architecture, IBB spans 1-58 (MSLRPSERAEVRRSRYKVAVDADEGRRRREDNMVEIRKSRREESLLKKRRDGLPAAAA). ARM repeat units follow at residues 111–151 (SPPI…NIAS), 154–193 (SDNT…NVAG), 196–236 (PKCR…NFCR), 238–277 (KPQP…YLSD), 280–319 (NDKI…NIVT), 322–362 (DMQT…NITA), 365–404 (REQI…NATS), and 408–447 (HDQI…NILK). A disordered region spans residues 505 to 534 (DAMPSGDNAQNGFNFGNQQPNVPSGGFNFG). Low complexity predominate over residues 514–523 (QNGFNFGNQQ).

Belongs to the importin alpha family. As to quaternary structure, forms a complex with importin subunit beta-1. The whole complex, most stable and composed of importin alpha and importin beta, is referred to as PTAC or pore targeting complex. As to expression, highly expressed in root and weakly in callus, etiolated leaf and green leaf.

Its subcellular location is the cytoplasm. It localises to the perinuclear region. In terms of biological role, functions in nuclear protein import. Binds specifically and directly to substrates containing either a simple or bipartite NLS motif. Promotes docking of import substrates to the nuclear envelope. In conjunction with importin beta-1, mediates the nuclear envelope docking, and the subsequent translocation into the nucleus of the constitutive morphogenetic 1 (COP1) protein containing bipartite NLS motif. This Oryza sativa subsp. japonica (Rice) protein is Importin subunit alpha-1b.